The primary structure comprises 1018 residues: Thrombospondin type-1 domain-containing protein 4 (1018 aa).

An N-terminal signal peptide occupies residues 1-25 (MVSHFMGSLSVLCFLLLLGFQFVCP). In terms of domain architecture, TSP type-1 1 spans 53–307 (PGVWGAWGPW…YKLCNTNVCP (255 aa)). 3 disordered regions span residues 111-235 (SVPL…RSGL), 254-279 (PAAS…ATQS), and 534-623 (SPQV…NWKQ). The span at 187-200 (QRLRRQKLSSRHSR) shows a compositional bias: basic residues. Residues 201–210 (SQGASSARHG) are compositionally biased toward low complexity. Residues 259–279 (LFHSPETSNNHGVGTHGATQS) are compositionally biased toward polar residues. 2 stretches are compositionally biased toward basic and acidic residues: residues 556 to 577 (RSQE…RGEA) and 592 to 603 (RHPDRFSPHRPD). TSP type-1 domains lie at 676 to 737 (CPAF…KICS), 739 to 792 (WQIR…DMGP), 793 to 851 (CAKS…GPCT), 852 to 911 (GKVE…HLKP), and 912 to 968 (CGAK…QDCV). One can recognise a PLAC domain in the interval 971–1008 (VDENCKDKYYNCNVVVQARLCVYNYYKTACCASCTRVA).

In terms of assembly, interacts with FBN1. May interact with TGFB1.

It localises to the secreted. The protein localises to the extracellular space. Its subcellular location is the extracellular matrix. Promotes FBN1 matrix assembly. Attenuates TGFB signaling, possibly by accelerating the sequestration of large latent complexes of TGFB or active TGFB by FBN1 microfibril assembly, thereby negatively regulating the expression of TGFB regulatory targets, such as POSTN. In Homo sapiens (Human), this protein is Thrombospondin type-1 domain-containing protein 4 (THSD4).